Consider the following 142-residue polypeptide: 3-hydroxyacyl-[acyl-carrier-protein] dehydratase FabZ (142 aa).

Residue His-48 is part of the active site.

It belongs to the thioester dehydratase family. FabZ subfamily.

It localises to the cytoplasm. The catalysed reaction is a (3R)-hydroxyacyl-[ACP] = a (2E)-enoyl-[ACP] + H2O. Involved in unsaturated fatty acids biosynthesis. Catalyzes the dehydration of short chain beta-hydroxyacyl-ACPs and long chain saturated and unsaturated beta-hydroxyacyl-ACPs. This Clostridioides difficile (strain 630) (Peptoclostridium difficile) protein is 3-hydroxyacyl-[acyl-carrier-protein] dehydratase FabZ.